The chain runs to 734 residues: Regulator of G-protein signaling rgs-6 (734 aa).

The segment at M1–N24 is disordered. Residues N8–N24 show a composition bias toward low complexity. The RGS domain occupies I46–S157. Disordered regions lie at residues Q162 to H236, H489 to A515, and V538 to V734. Residues T166 to D176 are compositionally biased toward acidic residues. Polar residues predominate over residues H180–E191. Positions A194 to A208 are enriched in low complexity. Polar residues-rich tracts occupy residues S494–R506 and V538–R557. Basic and acidic residues-rich tracts occupy residues S563–D585 and T606–D619. Residues A642–T694 are compositionally biased toward low complexity. Composition is skewed to polar residues over residues S705–L715 and R724–V734.

The sequence is that of Regulator of G-protein signaling rgs-6 from Caenorhabditis elegans.